Reading from the N-terminus, the 77-residue chain is Acyl carrier protein (77 aa).

Residues 2 to 77 (SSIDKRIKEI…DAIDYITDHT (76 aa)) enclose the Carrier domain. Serine 37 carries the O-(pantetheine 4'-phosphoryl)serine modification.

This sequence belongs to the acyl carrier protein (ACP) family. 4'-phosphopantetheine is transferred from CoA to a specific serine of apo-ACP by AcpS. This modification is essential for activity because fatty acids are bound in thioester linkage to the sulfhydryl of the prosthetic group.

It is found in the cytoplasm. It participates in lipid metabolism; fatty acid biosynthesis. In terms of biological role, carrier of the growing fatty acid chain in fatty acid biosynthesis. This is Acyl carrier protein from Geotalea daltonii (strain DSM 22248 / JCM 15807 / FRC-32) (Geobacter daltonii).